A 292-amino-acid chain; its full sequence is Homoserine kinase (292 aa).

P84–A94 is a binding site for ATP.

This sequence belongs to the GHMP kinase family. Homoserine kinase subfamily.

It is found in the cytoplasm. The enzyme catalyses L-homoserine + ATP = O-phospho-L-homoserine + ADP + H(+). The protein operates within amino-acid biosynthesis; L-threonine biosynthesis; L-threonine from L-aspartate: step 4/5. Catalyzes the ATP-dependent phosphorylation of L-homoserine to L-homoserine phosphate. The polypeptide is Homoserine kinase (Campylobacter jejuni subsp. jejuni serotype O:2 (strain ATCC 700819 / NCTC 11168)).